The primary structure comprises 344 residues: Intraflagellar transport protein 46 (344 aa).

Over residues 1–16 (MDDSMDYPDRDGDDLD) the composition is skewed to acidic residues. Residues 1–100 (MDDSMDYPDR…IANSDEAPPG (100 aa)) form a disordered region. Over residues 18–30 (FQGTARSQVVQNQ) the composition is skewed to polar residues.

Belongs to the IFT46 family. As to quaternary structure, component of the IFT complex B, the core composed of IFT25, IFT27, IFT46, IFT52, IFT74, IFT81 and IFT88 as well as associated subunits IFT20, IFT57, IFT80 and IFT172. Interacts with IFT25, IFT52, IFT70, IFT88 and DAW1.

Its subcellular location is the cytoplasm. It is found in the cytoskeleton. It localises to the cilium basal body. The protein localises to the cell projection. The protein resides in the cilium. Functionally, forms part of a complex involved in intraflagellar transport (IFT), the bi-directional movement of particles required for the assembly, maintenance and functioning of primary cilia. Plays a role in maintaining IFT complex B stability. The protein is Intraflagellar transport protein 46 of Chlamydomonas reinhardtii (Chlamydomonas smithii).